An 851-amino-acid chain; its full sequence is DNA mismatch repair protein MutS (851 aa).

Residue 602–609 (GPNMSGKS) participates in ATP binding.

The protein belongs to the DNA mismatch repair MutS family.

This protein is involved in the repair of mismatches in DNA. It is possible that it carries out the mismatch recognition step. This protein has a weak ATPase activity. This chain is DNA mismatch repair protein MutS, found in Streptococcus pyogenes serotype M49 (strain NZ131).